The primary structure comprises 478 residues: Probable cytosolic Fe-S cluster assembly factor AGAP009023 (478 aa).

[4Fe-4S] cluster is bound by residues C23, C69, C72, C75, C189, C245, C396, and C400.

This sequence belongs to the NARF family.

In terms of biological role, component of the cytosolic iron-sulfur (Fe/S) protein assembly machinery. Required for maturation of extramitochondrial Fe/S proteins. This Anopheles gambiae (African malaria mosquito) protein is Probable cytosolic Fe-S cluster assembly factor AGAP009023.